Consider the following 418-residue polypeptide: Probable aminotransferase Rv1178 (418 aa).

The segment at 22–42 (GQGWHDRERPASGQGSGAAER) is disordered.

It belongs to the class-I pyridoxal-phosphate-dependent aminotransferase family. Requires pyridoxal 5'-phosphate as cofactor.

The chain is Probable aminotransferase Rv1178 from Mycobacterium tuberculosis (strain ATCC 25618 / H37Rv).